A 450-amino-acid chain; its full sequence is Bifunctional protein GlmU (450 aa).

The tract at residues 1–221 (MRCIVLAAGM…SCEFIGINNR (221 aa)) is pyrophosphorylase. Residues 6–9 (LAAG), Lys20, Gln69, 74–75 (GT), 96–98 (YGD), Gly135, Glu150, Asn165, and Asn219 each bind UDP-N-acetyl-alpha-D-glucosamine. Asp98 contributes to the Mg(2+) binding site. Residue Asn219 coordinates Mg(2+). The linker stretch occupies residues 222–242 (IQLAQAEKFRRQWILEELMIK). The N-acetyltransferase stretch occupies residues 243–450 (GVTIVDPETT…VIDKRKKEED (208 aa)). 2 residues coordinate UDP-N-acetyl-alpha-D-glucosamine: Arg324 and Lys342. The Proton acceptor role is filled by His354. Tyr357 and Asn368 together coordinate UDP-N-acetyl-alpha-D-glucosamine. The acetyl-CoA site is built by Ala371, Ser396, Ala414, and Arg431.

It in the N-terminal section; belongs to the N-acetylglucosamine-1-phosphate uridyltransferase family. This sequence in the C-terminal section; belongs to the transferase hexapeptide repeat family. As to quaternary structure, homotrimer. The cofactor is Mg(2+).

The protein localises to the cytoplasm. It catalyses the reaction alpha-D-glucosamine 1-phosphate + acetyl-CoA = N-acetyl-alpha-D-glucosamine 1-phosphate + CoA + H(+). The catalysed reaction is N-acetyl-alpha-D-glucosamine 1-phosphate + UTP + H(+) = UDP-N-acetyl-alpha-D-glucosamine + diphosphate. Its pathway is nucleotide-sugar biosynthesis; UDP-N-acetyl-alpha-D-glucosamine biosynthesis; N-acetyl-alpha-D-glucosamine 1-phosphate from alpha-D-glucosamine 6-phosphate (route II): step 2/2. It participates in nucleotide-sugar biosynthesis; UDP-N-acetyl-alpha-D-glucosamine biosynthesis; UDP-N-acetyl-alpha-D-glucosamine from N-acetyl-alpha-D-glucosamine 1-phosphate: step 1/1. It functions in the pathway bacterial outer membrane biogenesis; LPS lipid A biosynthesis. In terms of biological role, catalyzes the last two sequential reactions in the de novo biosynthetic pathway for UDP-N-acetylglucosamine (UDP-GlcNAc). The C-terminal domain catalyzes the transfer of acetyl group from acetyl coenzyme A to glucosamine-1-phosphate (GlcN-1-P) to produce N-acetylglucosamine-1-phosphate (GlcNAc-1-P), which is converted into UDP-GlcNAc by the transfer of uridine 5-monophosphate (from uridine 5-triphosphate), a reaction catalyzed by the N-terminal domain. This is Bifunctional protein GlmU from Pseudothermotoga lettingae (strain ATCC BAA-301 / DSM 14385 / NBRC 107922 / TMO) (Thermotoga lettingae).